Reading from the N-terminus, the 84-residue chain is Delta-thalatoxin-Tas1a (84 aa).

Positions 1 to 19 (MAYLKIVLVALMLVLAVSA) are cleaved as a signal peptide. The propeptide occupies 20–33 (MRRPDQQDQDISVA). 3 disulfides stabilise this stretch: Cys38-Cys78, Cys40-Cys68, and Cys61-Cys79.

The protein belongs to the sea anemone sodium channel inhibitory toxin family. Type II subfamily.

The protein localises to the secreted. The protein resides in the nematocyst. Functionally, binds specifically to the voltage-gated sodium channel (Nav) and delays its inactivation. The protein is Delta-thalatoxin-Tas1a of Thalassianthus aster (Fuzzy-tipped anemone).